A 611-amino-acid chain; its full sequence is Phosphoenolpyruvate carboxykinase [GTP] (611 aa).

Substrate contacts are provided by residues arginine 82 and 222–224 (YGG). Positions 231 and 251 each coordinate Mn(2+). Serine 273 provides a ligand contact to substrate. 274 to 279 (ACGKTN) provides a ligand contact to GTP. Residue cysteine 275 is part of the active site. Aspartate 298 contributes to the Mn(2+) binding site. 389 to 391 (NSR) contacts substrate. GTP-binding positions include arginine 391, arginine 422, and 517–520 (FGDN).

Belongs to the phosphoenolpyruvate carboxykinase [GTP] family. As to quaternary structure, monomer. Mn(2+) is required as a cofactor.

Its subcellular location is the cytoplasm. The catalysed reaction is oxaloacetate + GTP = phosphoenolpyruvate + GDP + CO2. It functions in the pathway carbohydrate biosynthesis; gluconeogenesis. In terms of biological role, catalyzes the conversion of oxaloacetate (OAA) to phosphoenolpyruvate (PEP), the rate-limiting step in the metabolic pathway that produces glucose from lactate and other precursors derived from the citric acid cycle. The chain is Phosphoenolpyruvate carboxykinase [GTP] from Arthrobacter sp. (strain FB24).